Consider the following 317-residue polypeptide: mRNA 3'-end-processing protein yth-1 (317 aa).

The segment at 1–20 is disordered; it reads MATTTQTTTNSLPSGAGGPQ. C3H1-type zinc fingers lie at residues 51-78, 93-120, 121-149, 150-177, and 179-202; these read PADR…HVTA, GFGS…HEYN, LRKM…HIDP, LSRL…HFRR, and LCLY…HPRW. Residues 202 to 217 show a composition bias toward basic and acidic residues; it reads WTADKDMEKPRAKGEG. Positions 202–317 are disordered; sequence WTADKDMEKP…GRGGFRGKGH (116 aa). Over residues 223-237 the composition is skewed to low complexity; that stretch reads QQQQQQQQQQHMGDA. Residues 253–288 are compositionally biased toward basic and acidic residues; it reads YMDRERERDRDNREREMMMQGRDRDGGGHDRHKDRF. Positions 289–301 are enriched in gly residues; sequence GGGGGGGGGGRGR. Residues 302–317 are compositionally biased toward basic residues; sequence GGWRGRGRGGFRGKGH.

It belongs to the CPSF4/YTH1 family.

The protein localises to the nucleus. Component of the cleavage factor I (CF I) involved in pre-mRNA 3'-end processing. This chain is mRNA 3'-end-processing protein yth-1 (yth-1), found in Neurospora crassa (strain ATCC 24698 / 74-OR23-1A / CBS 708.71 / DSM 1257 / FGSC 987).